Here is a 110-residue protein sequence, read N- to C-terminus: Iron-sulfur cluster assembly protein CyaY (110 aa).

Belongs to the frataxin family.

Its function is as follows. Involved in iron-sulfur (Fe-S) cluster assembly. May act as a regulator of Fe-S biogenesis. This is Iron-sulfur cluster assembly protein CyaY from Pseudomonas putida (strain ATCC 700007 / DSM 6899 / JCM 31910 / BCRC 17059 / LMG 24140 / F1).